The primary structure comprises 236 residues: Thymidylate kinase (236 aa).

9–16 (GPEGSGKS) is an ATP binding site.

It belongs to the thymidylate kinase family.

The catalysed reaction is dTMP + ATP = dTDP + ADP. Functionally, phosphorylation of dTMP to form dTDP in both de novo and salvage pathways of dTTP synthesis. The protein is Thymidylate kinase of Herpetosiphon aurantiacus (strain ATCC 23779 / DSM 785 / 114-95).